A 270-amino-acid chain; its full sequence is UPF0354 protein BPUM_2629 (270 aa).

The protein belongs to the UPF0354 family.

In Bacillus pumilus (strain SAFR-032), this protein is UPF0354 protein BPUM_2629.